The following is a 33-amino-acid chain: DELTA-pseudomyrmecitoxin-Pp1a subunit B (33 aa).

Heterodimer composed of subunit A and subunit B (DELTA-PSDTX-Pp1a); disulfide-linked. As to expression, expressed by the venom gland.

The protein resides in the secreted. Its function is as follows. This heterodimer has insecticidal and cytotoxic properties. Induces immediate paralysis when injected into blowflies (Lucilia cuprina), and then death within 24 hours. Also inhibits the growth of Aedes albopictus mosquito C6/36 cells. This Pseudomyrmex penetrator (Ant) protein is DELTA-pseudomyrmecitoxin-Pp1a subunit B.